The primary structure comprises 332 residues: Probable thc operon regulatory protein (332 aa).

One can recognise an HTH araC/xylS-type domain in the interval 227 to 328; sequence RLAVDYLEAH…GVSPSEDLRT (102 aa). DNA-binding regions (H-T-H motif) lie at residues 244–265 and 295–318; these read AQVA…QNSL and VTEI…KQTF.

Its function is as follows. Probably involved in the positive regulation of the thc operon for the degradation of the thiocarbamate herbicide EPTC. The protein is Probable thc operon regulatory protein (thcR) of Rhodococcus erythropolis (Arthrobacter picolinophilus).